A 394-amino-acid chain; its full sequence is Queuine tRNA-ribosyltransferase accessory subunit 2 (394 aa).

Zn(2+) contacts are provided by C336, C338, C341, and H367.

The protein belongs to the queuine tRNA-ribosyltransferase family. QTRT2 subfamily. As to quaternary structure, heterodimer of a catalytic subunit and an accessory subunit. The cofactor is Zn(2+).

The protein resides in the cytoplasm. Non-catalytic subunit of the queuine tRNA-ribosyltransferase (TGT) that catalyzes the base-exchange of a guanine (G) residue with queuine (Q) at position 34 (anticodon wobble position) in tRNAs with GU(N) anticodons (tRNA-Asp, -Asn, -His and -Tyr), resulting in the hypermodified nucleoside queuosine (7-(((4,5-cis-dihydroxy-2-cyclopenten-1-yl)amino)methyl)-7-deazaguanosine). This Ixodes scapularis (Black-legged tick) protein is Queuine tRNA-ribosyltransferase accessory subunit 2.